Reading from the N-terminus, the 1079-residue chain is Translation initiation factor IF-2 (1079 aa).

Basic and acidic residues-rich tracts occupy residues 52 to 65 (VQAQ…KEGN), 75 to 90 (RDGD…KAPE), and 102 to 134 (APER…KEPQ). A disordered region spans residues 52-488 (VQAQRDGGAR…RGKKDVRPAA (437 aa)). Positions 150–184 (APVAKVVEAAPAETPAPEAPAVKATVTAEAAPAKT) are enriched in low complexity. Residues 185–194 (VEPESERPQA) are compositionally biased toward basic and acidic residues. A compositionally biased stretch (low complexity) spans 276–291 (AAVAQQQMQQQAAQQQ). Residues 306–327 (GGYRPEGQREGGYRPEGQREGG) are compositionally biased toward basic and acidic residues. 2 stretches are compositionally biased toward low complexity: residues 348–370 (EGGY…GPRP) and 380–398 (PGAP…APRP). Positions 419 to 429 (PRPGGFGGAPG) are enriched in gly residues. Positions 461–471 (PRGRSDDDVMR) are enriched in basic and acidic residues. Residues 473–482 (PRGRGKRGKK) show a composition bias toward basic residues. The tr-type G domain maps to 578–745 (TRPPVVTIMG…LIAIQAEILE (168 aa)). Residues 587–594 (GHVDHGKT) form a G1 region. 587–594 (GHVDHGKT) is a GTP binding site. The segment at 612 to 616 (GITQH) is G2. The interval 633–636 (DTPG) is G3. GTP-binding positions include 633-637 (DTPGH) and 687-690 (NKMD). Positions 687–690 (NKMD) are G4. Positions 723-725 (SAK) are G5.

The protein belongs to the TRAFAC class translation factor GTPase superfamily. Classic translation factor GTPase family. IF-2 subfamily.

It localises to the cytoplasm. In terms of biological role, one of the essential components for the initiation of protein synthesis. Protects formylmethionyl-tRNA from spontaneous hydrolysis and promotes its binding to the 30S ribosomal subunits. Also involved in the hydrolysis of GTP during the formation of the 70S ribosomal complex. In Nitratidesulfovibrio vulgaris (strain DP4) (Desulfovibrio vulgaris), this protein is Translation initiation factor IF-2.